A 343-amino-acid polypeptide reads, in one-letter code: MLTRRALVVQSQGEVQVEEIPLPTLRDEYITVKVKAVALNPGDWKMLYGPHATPGSILGCDYSGVVEKVGRAVNALLTPGDRVAGFAFGGCPYNHDEGGFASYVTAKGDIQAKLSDSISFEDAATLGVGITTVGQAMYQALGLPLPPAIIQEAASILVYGASTATGTLAVQYAKLTGLKVFATASPHNFDLLKKLGADEVFDYRDPECGAKIRTVTNGLLSLVFDTISEGSSPAIWAAAMGAKGGKYTALLPIKNFPRSDVKVTTILGYTALGVKVSDHLPANQKDFEFSAKFWKLSQHLLEKEKIKTHPVGVRQGGIDAIPQGLQDLKNGRVSGVKLVYKID.

42–45 (GDWK) provides a ligand contact to NADP(+). Position 128 to 135 (128 to 135 (VGITTVGQ)) interacts with substrate. NADP(+)-binding positions include 162-165 (STAT), 185-188 (SPHN), and Tyr-203. 268-272 (GYTAL) provides a ligand contact to substrate. 333 to 334 (VS) is a binding site for NADP(+).

The protein belongs to the zinc-containing alcohol dehydrogenase family. In terms of assembly, monomer.

It participates in mycotoxin biosynthesis. Functionally, trans-enoyl reductase; part of the gene clusters that mediate the biosynthesis of the host-selective toxins (HSTs) ACT-toxins responsible for brown spot of tangerine disease by the tangerine pathotype which affects tangerines and mandarins. ACT-toxins consist of three moieties, 9,10-epoxy-8-hydroxy-9-methyl-decatrienoic acid (EDA), valine and a polyketide. ACT-toxin I is toxic to both citrus and pear; toxin II the 5''-deoxy derivative of ACT-toxin I, is highly toxic to pear and slightly toxic to citrus. On cellular level, ACT-toxins affect plasma membrane of susceptible cells and cause a sudden increase in loss of K(+) after a few minutes of toxin treatment. The acyl-CoA ligase ACTT1, the hydrolase ACTT2, the enoyl-CoA hydratases ACTT3 and ACTT6, and the acyl-CoA synthetase ACTT5 are all involved in the biosynthesis of the AK-, AF- and ACT-toxin common 9,10-epoxy-8-hydroxy-9-methyl-decatrienoic acid (EDA) structural moiety. The exact role of each enzyme, and of additional enzymes identified within the AF-toxin clusters have still to be determined. On the other hand, ACTTS1 to ACTTS4 are specific to the tangerine pathotype. The function of ACTTS3 is to elongate the polyketide chain portion of ACT-toxin that is unique to this toxin. The enoyl-reductase ACTTS2 might complement the missing enoyl-reductase (ER) domain in ACTTS3 in the synthesis of the polyketide portion of ACT-toxin. The roles of the nonribosomal peptide synthetases-related proteins ACTTS1 and ACTTS4 have also still not been elucidated. The sequence is that of Trans-enoyl reductase ACTTS2 from Alternaria alternata (Alternaria rot fungus).